Consider the following 211-residue polypeptide: Ribonuclease HII (211 aa).

The 190-residue stretch at 11–200 (EFIAGVDEVG…VKKLLSTLLS (190 aa)) folds into the RNase H type-2 domain. 3 residues coordinate a divalent metal cation: D17, E18, and D109.

It belongs to the RNase HII family. Mn(2+) is required as a cofactor. The cofactor is Mg(2+).

Its subcellular location is the cytoplasm. It carries out the reaction Endonucleolytic cleavage to 5'-phosphomonoester.. Functionally, endonuclease that specifically degrades the RNA of RNA-DNA hybrids. The sequence is that of Ribonuclease HII from Histophilus somni (strain 2336) (Haemophilus somnus).